The sequence spans 438 residues: Serine/threonine exchanger SteT (438 aa).

The Cytoplasmic portion of the chain corresponds to 1–11 (MHTEDNGLKKE). Residues 12–32 (IGLLFALTLVIGTIIGSGVFM) traverse the membrane as a helical segment. At 33 to 45 (KPGAVLAYSGDSK) the chain is on the extracellular side. Residues 46 to 66 (MALFAWLLGGILTLAGGLTIA) form a helical membrane-spanning segment. Over 67 to 98 (EIGTQIPKTGGLYTYLEEVYGEFWGFLCGWVQ) the chain is Cytoplasmic. The chain crosses the membrane as a helical span at residues 99 to 119 (IIIYGPAIIGALGLYFGSLMA). Over 120–126 (NLFGWGS) the chain is Extracellular. A helical membrane pass occupies residues 127–147 (GLSKVIGIIAVLFLCVINIIG). Residues 148-151 (TKYG) lie on the Cytoplasmic side of the membrane. Residues 152–172 (GFVQTLTTIGKLIPIACIIVF) form a helical membrane-spanning segment. The Extracellular segment spans residues 173 to 193 (GLWKGDQHIFTAVNESISDMN). Residues 194 to 214 (FGAAILATLFAYDGWILLAAL) traverse the membrane as a helical segment. Over 215-230 (GGEMKNPEKLLPRAMT) the chain is Cytoplasmic. The helical transmembrane segment at 231–251 (GGLLIVTAIYIFINFALLHIL) threads the bilayer. At 252–269 (SANEIVTLGENATSTAAT) the chain is on the extracellular side. A helical membrane pass occupies residues 270–290 (MLFGSIGGKLISVGIIVSIFG). Topologically, residues 291–327 (CLNGKVLSFPRVSFAMAERKQLPFAEKLSHVHPSFRT) are cytoplasmic. A helical transmembrane segment spans residues 328-348 (PWIAISFQIALALIMMLISNP). Residues 349–352 (DKLS) are Extracellular-facing. A helical membrane pass occupies residues 353–373 (EISIFMIYIFYVMAFFAVFIL). Residues 374-388 (RKRAKGEKRAYSVPL) are Cytoplasmic-facing. A helical transmembrane segment spans residues 389–409 (YPFMPILAIAGSFFVLGSTLI). Residues 410–411 (TD) lie on the Extracellular side of the membrane. The helical transmembrane segment at 412–432 (TMSCGLSILIGLAGLPVYYGM) threads the bilayer. Over 433–438 (KKRKAS) the chain is Cytoplasmic.

It belongs to the amino acid-polyamine-organocation (APC) superfamily. L-type amino acid transporter (LAT) (TC 2.A.3.8) family. Monomer.

The protein resides in the cell membrane. Functionally, exhibits an obligate exchange activity for serine, threonine and aromatic amino acids. The chain is Serine/threonine exchanger SteT (steT) from Bacillus subtilis (strain 168).